The primary structure comprises 284 residues: Ribosomal RNA small subunit methyltransferase A (284 aa).

H23, L25, G50, E71, D92, and N121 together coordinate S-adenosyl-L-methionine.

It belongs to the class I-like SAM-binding methyltransferase superfamily. rRNA adenine N(6)-methyltransferase family. RsmA subfamily.

The protein resides in the cytoplasm. It catalyses the reaction adenosine(1518)/adenosine(1519) in 16S rRNA + 4 S-adenosyl-L-methionine = N(6)-dimethyladenosine(1518)/N(6)-dimethyladenosine(1519) in 16S rRNA + 4 S-adenosyl-L-homocysteine + 4 H(+). Functionally, specifically dimethylates two adjacent adenosines (A1518 and A1519) in the loop of a conserved hairpin near the 3'-end of 16S rRNA in the 30S particle. May play a critical role in biogenesis of 30S subunits. In Verminephrobacter eiseniae (strain EF01-2), this protein is Ribosomal RNA small subunit methyltransferase A.